A 587-amino-acid polypeptide reads, in one-letter code: Pectinesterase 2 (587 aa).

A signal peptide spans methionine 1 to alanine 40. N-linked (GlcNAc...) asparagine glycosylation is found at asparagine 99 and asparagine 218. Positions 351 and 381 each coordinate substrate. The active-site Proton donor is the aspartate 404. Cysteine 418 and cysteine 438 are disulfide-bonded. Aspartate 425 (nucleophile) is an active-site residue. Residues arginine 493 and tryptophan 495 each coordinate substrate.

It in the N-terminal section; belongs to the PMEI family. The protein in the C-terminal section; belongs to the pectinesterase family. Expressed in flower buds.

The protein localises to the secreted. The protein resides in the cell wall. It catalyses the reaction [(1-&gt;4)-alpha-D-galacturonosyl methyl ester](n) + n H2O = [(1-&gt;4)-alpha-D-galacturonosyl](n) + n methanol + n H(+). It participates in glycan metabolism; pectin degradation; 2-dehydro-3-deoxy-D-gluconate from pectin: step 1/5. Acts in the modification of cell walls via demethylesterification of cell wall pectin. The sequence is that of Pectinesterase 2 (PME2) from Arabidopsis thaliana (Mouse-ear cress).